The chain runs to 269 residues: Hydroxyethylthiazole kinase (269 aa).

Substrate is bound at residue Met-43. ATP contacts are provided by Arg-119 and Ser-165. Position 192 (Ala-192) interacts with substrate.

This sequence belongs to the Thz kinase family. The cofactor is Mg(2+).

It carries out the reaction 5-(2-hydroxyethyl)-4-methylthiazole + ATP = 4-methyl-5-(2-phosphooxyethyl)-thiazole + ADP + H(+). It participates in cofactor biosynthesis; thiamine diphosphate biosynthesis; 4-methyl-5-(2-phosphoethyl)-thiazole from 5-(2-hydroxyethyl)-4-methylthiazole: step 1/1. Functionally, catalyzes the phosphorylation of the hydroxyl group of 4-methyl-5-beta-hydroxyethylthiazole (THZ). This is Hydroxyethylthiazole kinase from Glaesserella parasuis serovar 5 (strain SH0165) (Haemophilus parasuis).